Here is a 271-residue protein sequence, read N- to C-terminus: MPELPEVETTVRGLARFLQGERITRTVTNRPDMRFPFPDGLGQALTGATVVSLGRRAKYGLIHTDRDQTMIFHLGMSGRWRIDPDETDKHDHLLIETADHRFALCDPRRFGWVDLVGTQALDQWPGFAAMGPEPLGDALTIEHLRAALSGRKQAIKLCLLDQAIVAGLGNIYVCEALWHARIHPRKAGGRVSKQALSLLITAIRDVLEQSIRDGGSSLRDYAQPDGELGYFATRFQVYGRDGQPCHRDDGGTIRRFAQGGRSTWYCPRCQR.

Catalysis depends on Pro-2, which acts as the Schiff-base intermediate with DNA. Glu-3 serves as the catalytic Proton donor. Lys-58 serves as the catalytic Proton donor; for beta-elimination activity. Residues His-90, Arg-108, and Arg-151 each contribute to the DNA site. An FPG-type; degenerate zinc finger spans residues 236–271 (QVYGRDGQPCHRDDGGTIRRFAQGGRSTWYCPRCQR). The Proton donor; for delta-elimination activity role is filled by Arg-261.

It belongs to the FPG family. Monomer. It depends on Zn(2+) as a cofactor.

It catalyses the reaction Hydrolysis of DNA containing ring-opened 7-methylguanine residues, releasing 2,6-diamino-4-hydroxy-5-(N-methyl)formamidopyrimidine.. The catalysed reaction is 2'-deoxyribonucleotide-(2'-deoxyribose 5'-phosphate)-2'-deoxyribonucleotide-DNA = a 3'-end 2'-deoxyribonucleotide-(2,3-dehydro-2,3-deoxyribose 5'-phosphate)-DNA + a 5'-end 5'-phospho-2'-deoxyribonucleoside-DNA + H(+). Its function is as follows. Involved in base excision repair of DNA damaged by oxidation or by mutagenic agents. Acts as a DNA glycosylase that recognizes and removes damaged bases. Has a preference for oxidized purines, such as 7,8-dihydro-8-oxoguanine (8-oxoG). Has AP (apurinic/apyrimidinic) lyase activity and introduces nicks in the DNA strand. Cleaves the DNA backbone by beta-delta elimination to generate a single-strand break at the site of the removed base with both 3'- and 5'-phosphates. The chain is Formamidopyrimidine-DNA glycosylase from Erythrobacter litoralis (strain HTCC2594).